Reading from the N-terminus, the 423-residue chain is Methanol:N,N-dimethyl-4-nitrosoaniline oxidoreductase (423 aa).

This sequence belongs to the iron-containing alcohol dehydrogenase family. Homodecamer. Mg(2+) serves as cofactor. Requires Zn(2+) as cofactor. It depends on NADPH as a cofactor.

It catalyses the reaction methanol + A = formaldehyde + AH2. Its function is as follows. Catalyzes the oxidation of methanol to yield formaldehyde. While the in vivo electron acceptor is not known, N,N-dimethyl-4-nitrosoaniline (NDMA) can serve this function in vitro and is reduced to 4-(hydroxylamino)-N,N-dimethylaniline. The protein is Methanol:N,N-dimethyl-4-nitrosoaniline oxidoreductase (thcE) of Rhodococcus erythropolis (Arthrobacter picolinophilus).